A 513-amino-acid polypeptide reads, in one-letter code: Ectonucleoside triphosphate diphosphohydrolase 1 (513 aa).

Over 1 to 16 (MEDRRESELKVFCSKN) the chain is Cytoplasmic. Residues 17–37 (ILSILGFSCIIAVIALLALGL) traverse the membrane as a helical segment. The Extracellular portion of the chain corresponds to 38–481 (TQNKALPENV…SPPLPHSTYV (444 aa)). N73 is a glycosylation site (N-linked (GlcNAc...) asparagine). E174 functions as the Proton acceptor in the catalytic mechanism. N-linked (GlcNAc...) asparagine glycosylation is found at N227 and N245. 2 disulfide bridges follow: C255-C300 and C281-C327. N-linked (GlcNAc...) asparagine glycans are attached at residues N307 and N336. The cysteines at positions 340 and 345 are disulfide-linked. N373 carries N-linked (GlcNAc...) asparagine glycosylation. Residues C393 and C416 are joined by a disulfide bond. N460 carries N-linked (GlcNAc...) asparagine glycosylation. A helical membrane pass occupies residues 482–502 (FLMVLFSLILLAVIIVGIVVF). Over 503–513 (HKPSYFWKDMV) the chain is Cytoplasmic.

Belongs to the GDA1/CD39 NTPase family. Homodimer; disulfide-linked. Requires Ca(2+) as cofactor. Mg(2+) serves as cofactor. Post-translationally, N-glycosylated. In terms of processing, the N-terminus is blocked. Palmitoylated on Cys-13; which is required for caveola targeting.

Its subcellular location is the membrane. It localises to the caveola. It catalyses the reaction a ribonucleoside 5'-triphosphate + 2 H2O = a ribonucleoside 5'-phosphate + 2 phosphate + 2 H(+). The enzyme catalyses a ribonucleoside 5'-triphosphate + H2O = a ribonucleoside 5'-diphosphate + phosphate + H(+). The catalysed reaction is a ribonucleoside 5'-diphosphate + H2O = a ribonucleoside 5'-phosphate + phosphate + H(+). It carries out the reaction ATP + 2 H2O = AMP + 2 phosphate + 2 H(+). It catalyses the reaction ATP + H2O = ADP + phosphate + H(+). The enzyme catalyses ADP + H2O = AMP + phosphate + H(+). The catalysed reaction is CTP + 2 H2O = CMP + 2 phosphate + 2 H(+). It carries out the reaction CTP + H2O = CDP + phosphate + H(+). It catalyses the reaction CDP + H2O = CMP + phosphate + H(+). The enzyme catalyses GTP + 2 H2O = GMP + 2 phosphate + 2 H(+). The catalysed reaction is GTP + H2O = GDP + phosphate + H(+). It carries out the reaction GDP + H2O = GMP + phosphate + H(+). It catalyses the reaction ITP + 2 H2O = IMP + 2 phosphate + 2 H(+). The enzyme catalyses ITP + H2O = IDP + phosphate + H(+). The catalysed reaction is IDP + H2O = IMP + phosphate + H(+). It carries out the reaction UTP + 2 H2O = UMP + 2 phosphate + 2 H(+). It catalyses the reaction UTP + H2O = UDP + phosphate + H(+). The enzyme catalyses UDP + H2O = UMP + phosphate + H(+). Functionally, catalyzes the hydrolysis of both di- and triphosphate nucleotides (NDPs and NTPs) and hydrolyze NTPs to nucleotide monophosphates (NMPs) in two distinct successive phosphate-releasing steps, with NDPs as intermediates and participates in the regulation of extracellular levels of nucleotides. By hydrolyzing proinflammatory ATP and platelet-activating ADP to AMP, it blocks platelet aggregation and supports blood flow. This Bos taurus (Bovine) protein is Ectonucleoside triphosphate diphosphohydrolase 1.